A 145-amino-acid chain; its full sequence is D-aminoacyl-tRNA deacylase (145 aa).

The Gly-cisPro motif, important for rejection of L-amino acids signature appears at 137-138; the sequence is GP.

Belongs to the DTD family. Homodimer.

The protein resides in the cytoplasm. It carries out the reaction glycyl-tRNA(Ala) + H2O = tRNA(Ala) + glycine + H(+). The catalysed reaction is a D-aminoacyl-tRNA + H2O = a tRNA + a D-alpha-amino acid + H(+). Functionally, an aminoacyl-tRNA editing enzyme that deacylates mischarged D-aminoacyl-tRNAs. Also deacylates mischarged glycyl-tRNA(Ala), protecting cells against glycine mischarging by AlaRS. Acts via tRNA-based rather than protein-based catalysis; rejects L-amino acids rather than detecting D-amino acids in the active site. By recycling D-aminoacyl-tRNA to D-amino acids and free tRNA molecules, this enzyme counteracts the toxicity associated with the formation of D-aminoacyl-tRNA entities in vivo and helps enforce protein L-homochirality. This is D-aminoacyl-tRNA deacylase from Azotobacter vinelandii (strain DJ / ATCC BAA-1303).